Consider the following 259-residue polypeptide: Deoxyribose-phosphate aldolase (259 aa).

The Proton donor/acceptor role is filled by Asp-102. The active-site Schiff-base intermediate with acetaldehyde is the Lys-167. The Proton donor/acceptor role is filled by Lys-201.

Belongs to the DeoC/FbaB aldolase family. DeoC type 2 subfamily.

The protein resides in the cytoplasm. The enzyme catalyses 2-deoxy-D-ribose 5-phosphate = D-glyceraldehyde 3-phosphate + acetaldehyde. It functions in the pathway carbohydrate degradation; 2-deoxy-D-ribose 1-phosphate degradation; D-glyceraldehyde 3-phosphate and acetaldehyde from 2-deoxy-alpha-D-ribose 1-phosphate: step 2/2. In terms of biological role, catalyzes a reversible aldol reaction between acetaldehyde and D-glyceraldehyde 3-phosphate to generate 2-deoxy-D-ribose 5-phosphate. The protein is Deoxyribose-phosphate aldolase of Escherichia coli O8 (strain IAI1).